The primary structure comprises 196 residues: Peroxynitrite isomerase (196 aa).

Positions 46 to 52 (GVWRGRG) match the GXWXGXG motif. H186 provides a ligand contact to heme b.

The protein belongs to the nitrobindin family. As to quaternary structure, homodimer. Heme b serves as cofactor.

The catalysed reaction is peroxynitrite = nitrate. It participates in nitrogen metabolism. Heme-binding protein able to scavenge peroxynitrite and to protect free L-tyrosine against peroxynitrite-mediated nitration, by acting as a peroxynitrite isomerase that converts peroxynitrite to nitrate. Therefore, this protein likely plays a role in peroxynitrite sensing and in the detoxification of reactive nitrogen and oxygen species (RNS and ROS, respectively). Is able to bind nitric oxide (NO) in vitro, but may act as a sensor of peroxynitrite levels in vivo. The sequence is that of Peroxynitrite isomerase from Salinispora tropica (strain ATCC BAA-916 / DSM 44818 / JCM 13857 / NBRC 105044 / CNB-440).